Reading from the N-terminus, the 637-residue chain is Sterol 3-beta-glucosyltransferase UGT80A2 (637 aa).

Disordered stretches follow at residues 1 to 29 (MPEISPAELAKVSSSSSSSSSSSSGRASV) and 66 to 112 (VAES…TERQ). Low complexity predominate over residues 13–24 (SSSSSSSSSSSS). Polar residues predominate over residues 67 to 79 (AESSGTGNKSFSR). The segment covering 103–112 (RLDKSKTERQ) has biased composition (basic and acidic residues).

Belongs to the glycosyltransferase 28 family. Expressed in roots, cauline leaf epidermal cells, stomata, stamen, pollen and around the base of siliques.

The catalysed reaction is a sterol + UDP-alpha-D-glucose = a sterol 3-beta-D-glucoside + UDP + H(+). In terms of biological role, involved in the biosynthesis of sterol glucosides. Catalyzes the synthesis of steryl glycosides (SGs) and acyl steryl glycosides (ASGs) which are the most abundant sterol derivatives in higher plants. Can act on several sterols like sitosterol, campesterol and stigmasterol. Both UGT80A2 and UGT80B1 are required for the normal production of SGs and ASGs in seeds. The polypeptide is Sterol 3-beta-glucosyltransferase UGT80A2 (UGT80A2) (Arabidopsis thaliana (Mouse-ear cress)).